A 57-amino-acid polypeptide reads, in one-letter code: Small ribosomal subunit protein eS27 (57 aa).

C10, C13, C29, and C32 together coordinate Zn(2+). The segment at 10-32 (CDDCENEQVLFGKAANTVNCAVC) adopts a C4-type zinc-finger fold.

This sequence belongs to the eukaryotic ribosomal protein eS27 family. Part of the 30S ribosomal subunit. The cofactor is Zn(2+).

This is Small ribosomal subunit protein eS27 from Natronomonas pharaonis (strain ATCC 35678 / DSM 2160 / CIP 103997 / JCM 8858 / NBRC 14720 / NCIMB 2260 / Gabara) (Halobacterium pharaonis).